Reading from the N-terminus, the 381-residue chain is CD2 homolog (381 aa).

A signal peptide spans 1–16; that stretch reads MIIKLIFLICFKIVLS. Residues 17–208 are Extracellular-facing; sequence INYWVRYNDT…QNYFLENIHT (192 aa). N-linked (GlcNAc...) asparagine; by host glycans are attached at residues Asn24, Asn73, Asn77, Asn85, Asn91, Asn104, Asn121, Asn133, Asn144, Asn176, Asn183, and Asn189. 2 disulfides stabilise this stretch: Cys122–Cys190 and Cys129–Cys173. A helical membrane pass occupies residues 209 to 229; the sequence is LFYMIIFIVSGITISIFISII. The Cytoplasmic portion of the chain corresponds to 230-381; the sequence is TFLSLRKRKK…ISLIHVDRII (152 aa). Residues 243–278 form a disordered region; the sequence is EIESPPPESNEEEQCQHDDTTSIHEPSPREPLLPKP. Positions 256 to 270 are enriched in basic and acidic residues; that stretch reads QCQHDDTTSIHEPSP. A run of 7 repeats spans residues 305 to 310, 311 to 316, 317 to 322, 323 to 328, 329 to 334, 335 to 340, and 341 to 346. Positions 305 to 334 are 7 X 6 AA tandem repeats of K-[LP]-C-[PRS]-[PS]-[PS]; sequence KPCPPPKPCPPPKPCPPPKPCPPPKPCPPP. The segment at 341-362 is disordered; that stretch reads KPCPPPESYSPPKPLPSIPLLP.

The protein belongs to the asfivirus CD2 homolog protein family. Both glycosylated and nonglycosylated forms interact (via C-terminus) with the host AP-1 complex. Post-translationally, cleaved into two fragments of 63 kDa and 26 kDa containing respectively the glycosylated N-terminus and the nonglycosylated C-terminus. A full-length 89-kDa glycosylated form also exists.

The protein resides in the host membrane. It is found in the virion membrane. Its subcellular location is the host Golgi apparatus. In terms of biological role, may play an immunosuppressive role by inhibiting lymphocyte proliferation and subsequently facilitating viral replication and generalization of infection. Responsible for viral hemadsorption, which may help viral spread. Increases virus replication in the tick vector at the step of virus uptake or replication in the tick gut. May play a role in the host Golgi reorganization to yield viral factories. May play a role in host cell penetration. The polypeptide is CD2 homolog (African swine fever virus (isolate Warthog/Namibia/Wart80/1980) (ASFV)).